The sequence spans 639 residues: CD2-associated protein (639 aa).

The 59-residue stretch at 1–59 folds into the SH3 1; truncated domain; it reads MVDYIVEYDYDAVHDDELTIRVGEIIRNVKKLQEEGWLEGELNGRRGMFPDNFVKEIKR. Residues 1 to 175 form an interaction with ANLN and localization to the midbody region; it reads MVDYIVEYDY…EVTDDGETHE (175 aa). A Glycyl lysine isopeptide (Lys-Gly) (interchain with G-Cter in SUMO2) cross-link involves residue K58. A phosphoserine mark is found at S67, S80, and S86. The region spanning 108–167 is the SH3 2 domain; it reads TKKRQCKVLFEYIPQNEDELELKVGDIIDINEEVEEGWWSGTLNNKLGLFPSNFVKELEV. Residues 168 to 177 are compositionally biased toward basic and acidic residues; it reads TDDGETHEAQ. The segment at 168 to 209 is disordered; it reads TDDGETHEAQDDSETVLAGPTSPIPSLGNVSETASGSVTQPK. The span at 195 to 207 shows a compositional bias: polar residues; sequence GNVSETASGSVTQ. Position 224 is a phosphoserine (S224). Positions 227–256 are disordered; that stretch reads LRTRTSSSETEEKKPEKPLILQSLGPKTQS. The 62-residue stretch at 269–330 folds into the SH3 3 domain; sequence KAKEYCRTLF…PDNFAVQINE (62 aa). Residues 333–428 are disordered; the sequence is KDFPKPKKPP…PPPPIAKING (96 aa). Short sequence motifs (SH3-binding) lie at residues 336–352, 378–397, and 410–422; these read PKPK…APKP, KPSK…PPTK, and PKRP…PPPP. Positions 341 to 351 are enriched in pro residues; sequence PPPPAKAPAPK. Positions 356-379 are enriched in basic and acidic residues; the sequence is AAEKKYFSLKPEEKDEKSTLEQKP. A compositionally biased stretch (pro residues) spans 385 to 395; that stretch reads PQVPPKKPTPP. Residues S458, S463, S469, S510, and S514 each carry the phosphoserine modification. K523 participates in a covalent cross-link: Glycyl lysine isopeptide (Lys-Gly) (interchain with G-Cter in SUMO2). A Phosphothreonine modification is found at T565. A coiled-coil region spans residues 577-638; sequence DVKKNSLDEL…IEKLKKAVLS (62 aa). At S582 the chain carries Phosphoserine.

In terms of assembly, homodimer. Interacts with F-actin, PKD2, NPHS1 and NPHS2. Interacts with WTIP. Interacts with DDN; interaction is direct. Interacts (via SH3 2 domain) with CBL (via phosphorylated C-terminus). Interacts with BCAR1/p130Cas (via SH3 domain). Interacts with MVB12A and ARHGAP17. Interacts with ANLN, CD2 and CBLB. Interacts with PDCD6IP and TSG101. Interacts with RIN3. Interacts directly with RET (inactive) and CBLC; upon RET activation by GDNF suggested to dissociate from RET as CBLC:CD2AP complex. Interacts with CGNL1 and SH3BP1; probably part of a complex at cell junctions. Interacts with CAPZA1. As to quaternary structure, (Microbial infection) Interacts (via SH3 domains) with Chikungunya virus non-structural protein 3 (via C-terminus); this interaction plays a role in initiation of viral replication. Post-translationally, phosphorylated on tyrosine residues; probably by c-Abl, Fyn and c-Src. Widely expressed in fetal and adult tissues.

The protein resides in the cytoplasm. Its subcellular location is the cytoskeleton. The protein localises to the cell projection. It localises to the ruffle. It is found in the cell junction. Its function is as follows. Seems to act as an adapter protein between membrane proteins and the actin cytoskeleton. In collaboration with CBLC, modulates the rate of RET turnover and may act as regulatory checkpoint that limits the potency of GDNF on neuronal survival. Controls CBLC function, converting it from an inhibitor to a promoter of RET degradation. May play a role in receptor clustering and cytoskeletal polarity in the junction between T-cell and antigen-presenting cell. May anchor the podocyte slit diaphragm to the actin cytoskeleton in renal glomerolus. Also required for cytokinesis. Plays a role in epithelial cell junctions formation. The chain is CD2-associated protein (CD2AP) from Homo sapiens (Human).